The following is a 352-amino-acid chain: 2'-dehydrokanamycin reductase (352 aa).

The protein belongs to the NAD(P)-dependent epimerase/dehydratase family.

The enzyme catalyses 2'-dehydrokanamycin A + NADPH + H(+) = kanamycin A + NADP(+). Its pathway is antibiotic biosynthesis; kanamycin biosynthesis. In terms of biological role, mediates the conversion of 2'-dehydrokanamycin A into kanamycin A. The sequence is that of 2'-dehydrokanamycin reductase (kanK) from Streptomyces kanamyceticus.